The sequence spans 152 residues: Cell division protein SepF (152 aa).

Residues 23–32 are compositionally biased toward basic and acidic residues; it reads EVAREPEPMQ. The interval 23–42 is disordered; the sequence is EVAREPEPMQKKTKKEKPSK.

The protein belongs to the SepF family. As to quaternary structure, homodimer. Interacts with FtsZ.

It is found in the cytoplasm. Functionally, cell division protein that is part of the divisome complex and is recruited early to the Z-ring. Probably stimulates Z-ring formation, perhaps through the cross-linking of FtsZ protofilaments. Its function overlaps with FtsA. This is Cell division protein SepF from Listeria innocua serovar 6a (strain ATCC BAA-680 / CLIP 11262).